Consider the following 136-residue polypeptide: Acyl-CoA thioesterase YbgC (136 aa).

Residue Asp-18 is part of the active site.

It belongs to the 4-hydroxybenzoyl-CoA thioesterase family.

Its function is as follows. Displays acyl-CoA thioesterase activity with short chain aliphatic acyl-CoA thioesters, such as propionyl-CoA and butyryl-CoA. Enzyme activity is relatively low, suggesting that the acyl-CoA thioesters used in the assays are not the physiological substrates. Has no detectable activity with 4-hydroxybenzoyl-CoA, lauroyl-CoA (C12:0), arachidoyl-CoA (C20:0) and arachidonoyl-CoA (C20:4). The chain is Acyl-CoA thioesterase YbgC (ybgC) from Haemophilus influenzae (strain ATCC 51907 / DSM 11121 / KW20 / Rd).